A 397-amino-acid polypeptide reads, in one-letter code: Arginine biosynthesis bifunctional protein ArgJ (397 aa).

Substrate-binding residues include threonine 147, lysine 173, threonine 184, glutamate 270, asparagine 392, and threonine 397. Residue threonine 184 is the Nucleophile of the active site.

The protein belongs to the ArgJ family. Heterotetramer of two alpha and two beta chains.

Its subcellular location is the cytoplasm. The enzyme catalyses N(2)-acetyl-L-ornithine + L-glutamate = N-acetyl-L-glutamate + L-ornithine. It catalyses the reaction L-glutamate + acetyl-CoA = N-acetyl-L-glutamate + CoA + H(+). Its pathway is amino-acid biosynthesis; L-arginine biosynthesis; L-ornithine and N-acetyl-L-glutamate from L-glutamate and N(2)-acetyl-L-ornithine (cyclic): step 1/1. It participates in amino-acid biosynthesis; L-arginine biosynthesis; N(2)-acetyl-L-ornithine from L-glutamate: step 1/4. In terms of biological role, catalyzes two activities which are involved in the cyclic version of arginine biosynthesis: the synthesis of N-acetylglutamate from glutamate and acetyl-CoA as the acetyl donor, and of ornithine by transacetylation between N(2)-acetylornithine and glutamate. The chain is Arginine biosynthesis bifunctional protein ArgJ from Streptococcus thermophilus (strain ATCC BAA-250 / LMG 18311).